The sequence spans 199 residues: Recombination protein RecR (199 aa).

Residues 57–72 (CEICGNLDTKSICHIC) form a C4-type zinc finger. The Toprim domain maps to 80 to 175 (STIAIVETVA…KISRLASGIP (96 aa)).

Belongs to the RecR family.

In terms of biological role, may play a role in DNA repair. It seems to be involved in an RecBC-independent recombinational process of DNA repair. It may act with RecF and RecO. The chain is Recombination protein RecR from Rickettsia prowazekii (strain Madrid E).